Consider the following 118-residue polypeptide: Fluoride-specific ion channel FluC 2 (118 aa).

Helical transmembrane passes span 1-21, 33-53, 55-75, and 93-113; these read MIEA…RFAI, FPIA…YIIG, GVTT…FTTF, and TFLL…FLGM. Residues Gly-70 and Thr-73 each contribute to the Na(+) site.

This sequence belongs to the fluoride channel Fluc/FEX (TC 1.A.43) family.

Its subcellular location is the cell membrane. The enzyme catalyses fluoride(in) = fluoride(out). Its activity is regulated as follows. Na(+) is not transported, but it plays an essential structural role and its presence is essential for fluoride channel function. Fluoride-specific ion channel. Important for reducing fluoride concentration in the cell, thus reducing its toxicity. This is Fluoride-specific ion channel FluC 2 from Bacillus cereus (strain ZK / E33L).